A 301-amino-acid chain; its full sequence is uncharacterized protein (301 aa).

Active-site charge relay system residues include Ser44 and Tyr107. Tyr133 (proton donor) is an active-site residue. The active-site Schiff-base intermediate with substrate is the Lys162.

The protein belongs to the DapA family. Homotetramer.

Its subcellular location is the cytoplasm. This is an uncharacterized protein from Pyrobaculum arsenaticum (strain DSM 13514 / JCM 11321 / PZ6).